The following is a 90-amino-acid chain: Small ribosomal subunit protein uS15c (90 aa).

It belongs to the universal ribosomal protein uS15 family. As to quaternary structure, part of the 30S ribosomal subunit.

The protein resides in the plastid. Its subcellular location is the chloroplast. The protein is Small ribosomal subunit protein uS15c (rps15-A) of Ipomoea purpurea (Common morning glory).